We begin with the raw amino-acid sequence, 311 residues long: Natural killer cell receptor 2B4 (311 aa).

Positions 1 to 19 are cleaved as a signal peptide; the sequence is MLQQTVLLSLFLLLRAHQG. Topologically, residues 20-223 are extracellular; that stretch reads QDCADSSEEV…CQSVPSKFNY (204 aa). Cys-22 and Cys-118 are oxidised to a cystine. 2 consecutive Ig-like domains span residues 22–128 and 131–215; these read CADS…LIFD and ETPH…QSCQ. N-linked (GlcNAc...) asparagine glycosylation is found at Asn-101, Asn-144, Asn-160, Asn-183, Asn-196, and Asn-205. Cys-153 and Cys-195 are oxidised to a cystine. Residues 224 to 247 traverse the membrane as a helical segment; the sequence is LPFMVSIGILVKFFHGAIDCFCVW. At 248 to 311 the chain is on the cytoplasmic side; that stretch reads NRKRKQSQSI…RRLFQFINRS (64 aa). Residues 275 to 301 form a disordered region; it reads RDQRGHFRASGSSSDVRGDERGQRESD. Residues 290 to 301 are compositionally biased toward basic and acidic residues; it reads VRGDERGQRESD.

As to quaternary structure, interacts with CD48. Interacts (via phosphorylated ITSM 1-4) with SH2D1A (via SH2 domain); SH2D1A probably mediates association with FYN. Interacts (via phosphorylated ITSM 3) with PTPN11/SHP-2, INPP5D/SHIP1, PTPN6/SHP-1 and CSK; binding of SH2D1A/SAP prevents association with PTPN11, PTPN6 and CSK; conflictingly a similar association has been described for phosphorylated ITSM 1 also including GRB2 and PLCG1. Interacts weakly (via phosphorylated ITSM 2) with PTPN11/SHP-2 and CSK. Interacts with SH2D1B. Interacts with PIK3R1; PI3K recruits SH2D1A. Interacts with MHC class I proteins; the interaction is proposed to prevent self-killing of NK cells. In terms of processing, N-linked glycosylation is essential for the binding to its ligand CD48. Also O-glycosylated, in contrast, O-linked sialylation has a negative impact on ligand binding. Post-translationally, phosphorylated by FYN and CSK on tyrosine residues following activation. Coligation with inhibitory receptors such as KIR2DL1 inhibits phosphorylation upon contact of NK cells with sensitive target cells.

The protein localises to the membrane. It localises to the cell membrane. Its subcellular location is the membrane raft. Its function is as follows. Heterophilic receptor of the signaling lymphocytic activation molecule (SLAM) family; its ligand is CD48. SLAM receptors triggered by homo- or heterotypic cell-cell interactions are modulating the activation and differentiation of a wide variety of immune cells and thus are involved in the regulation and interconnection of both innate and adaptive immune response. Activities are controlled by presence or absence of small cytoplasmic adapter proteins, SH2D1A/SAP and/or SH2D1B/EAT-2. Acts as activating natural killer (NK) cell receptor. Activating function implicates association with SH2D1A and FYN. Downstreaming signaling involves predominantly VAV1, and, to a lesser degree, INPP5D/SHIP1 and CBL. Signal attenuation in the absence of SH2D1A is proposed to be dependent on INPP5D and to a lesser extent PTPN6/SHP-1 and PTPN11/SHP-2. Stimulates NK cell cytotoxicity, production of IFN-gamma and granule exocytosis. Optimal expansion and activation of NK cells seems to be dependent on the engagement of CD244 with CD48 expressed on neighboring NK cells. Acts as costimulator in NK activation by enhancing signals by other NK receptors such as NCR3 and NCR1. At early stages of NK cell differentiation may function as an inhibitory receptor possibly ensuring the self-tolerance of developing NK cells. Involved in the regulation of CD8(+) T-cell proliferation; expression on activated T-cells and binding to CD48 provides costimulatory-like function for neighboring T-cells. Inhibits inflammatory responses in dendritic cells (DCs). This is Natural killer cell receptor 2B4 (Cd244) from Rattus norvegicus (Rat).